Here is a 300-residue protein sequence, read N- to C-terminus: F-box/LRR-repeat protein 15 (300 aa).

N-acetylmethionine is present on methionine 1. Positions 19–66 (LLDLPWEDVLLPHILSRVPLRQLLRLQRVSRAFRALVQLHLAGLRRFD) constitute an F-box domain. Residues 113 to 269 (NPQLRSVALA…EPSLSRLRKR (157 aa)) form an interaction with SMURF1 region. 5 LRR repeats span residues 141-162 (RLQRLSLAHCDWVDGLALRGLA), 167-188 (ALEELDLTACRQLKDEAIVYLA), 194-215 (GLRSLSLAVNANVGDAAVQELA), 220-241 (ELEHLDLTGCLRVGSDGVRTLA), and 246-267 (ALRSLRVRHCHHVAEPSLSRLR).

It belongs to the FBXL15 family. Part of the SCF (SKP1-CUL1-F-box) E3 ubiquitin-protein ligase complex SCF(FBXL15) composed of CUL1, SKP1, RBX1 and FBXL15.

It localises to the cytoplasm. It participates in protein modification; protein ubiquitination. Its function is as follows. Substrate recognition component of a SCF (SKP1-CUL1-F-box protein) E3 ubiquitin-protein ligase complex which mediates the ubiquitination and subsequent proteasomal degradation of SMURF1, thereby acting as a positive regulator of the BMP signaling pathway. Required for dorsal/ventral pattern formation and bone mass maintenance. Also mediates ubiquitination of SMURF2 and WWP2. This is F-box/LRR-repeat protein 15 (FBXL15) from Canis lupus familiaris (Dog).